A 163-amino-acid polypeptide reads, in one-letter code: Centrosomal protein of 19 kDa (163 aa).

This sequence belongs to the CEP19 family. In terms of assembly, interacts with CEP43; this interaction is required for its localization to the mother centriole. Interacts (via residues 121-150) with RABL2B. Interacts (via C-terminus) with CEP350; this interaction is required for its localization to the mother centriole.

It is found in the cytoplasm. The protein resides in the cytoskeleton. It localises to the microtubule organizing center. The protein localises to the centrosome. Its subcellular location is the centriole. It is found in the spindle pole. The protein resides in the cilium basal body. Required for ciliation. Recruits the RABL2B GTPase to the ciliary base to initiate ciliation. After specifically capturing the activated GTP-bound RABL2B, the CEP19-RABL2B complex binds intraflagellar transport (IFT) complex B from the large pool pre-docked at the base of the cilium and thus triggers its entry into the cilia. Involved in the early steps in cilia formation by recruiting the ciliary vesicles (CVs) to the distal end of the mother centriole where they fuse to initiate cilium assembly. Involved in microtubule (MT) anchoring at centrosomes. This is Centrosomal protein of 19 kDa (Cep19) from Rattus norvegicus (Rat).